A 218-amino-acid chain; its full sequence is Ribose-5-phosphate isomerase A (218 aa).

Substrate contacts are provided by residues Ser-28 to Thr-31, Asp-81 to Asp-84, and Lys-94 to Gly-97. Glu-103 acts as the Proton acceptor in catalysis. Lys-121 provides a ligand contact to substrate.

The protein belongs to the ribose 5-phosphate isomerase family. In terms of assembly, homodimer.

It catalyses the reaction aldehydo-D-ribose 5-phosphate = D-ribulose 5-phosphate. It functions in the pathway carbohydrate degradation; pentose phosphate pathway; D-ribose 5-phosphate from D-ribulose 5-phosphate (non-oxidative stage): step 1/1. Its function is as follows. Catalyzes the reversible conversion of ribose-5-phosphate to ribulose 5-phosphate. The sequence is that of Ribose-5-phosphate isomerase A from Wigglesworthia glossinidia brevipalpis.